A 377-amino-acid chain; its full sequence is Nitric oxide reductase FlRd-NAD(+) reductase (377 aa).

Belongs to the FAD-dependent oxidoreductase family. FAD serves as cofactor.

It is found in the cytoplasm. It catalyses the reaction 2 reduced [nitric oxide reductase rubredoxin domain] + NAD(+) + H(+) = 2 oxidized [nitric oxide reductase rubredoxin domain] + NADH. It participates in nitrogen metabolism; nitric oxide reduction. One of at least two accessory proteins for anaerobic nitric oxide (NO) reductase. Reduces the rubredoxin moiety of NO reductase. This Enterobacter sp. (strain 638) protein is Nitric oxide reductase FlRd-NAD(+) reductase.